Reading from the N-terminus, the 195-residue chain is Interferon tau (195 aa).

The N-terminal stretch at 1 to 23 is a signal peptide; sequence MAFVLSLRMALVLVSYCPGGSLG. 2 cysteine pairs are disulfide-bonded: C24/C122 and C52/C162. Residue N101 is glycosylated (N-linked (GlcNAc...) asparagine).

This sequence belongs to the alpha/beta interferon family. IFN-alphaII subfamily. As to expression, constitutively and exclusively expressed in the mononuclear cells of the extraembryonic trophectoderm.

The protein localises to the secreted. Paracrine hormone primarily responsible for maternal recognition of pregnancy. Interacts with endometrial receptors, probably type I interferon receptors, and blocks estrogen receptor expression, preventing the estrogen-induced increase in oxytocin receptor expression in the endometrium. This results in the suppression of the pulsatile endometrial release of the luteolytic hormone prostaglandin F2-alpha, hindering the regression of the corpus luteum (luteolysis) and therefore a return to ovarian cyclicity. This, and a possible direct effect of IFN-tau on prostaglandin synthesis, leads in turn to continued ovarian progesterone secretion, which stimulates the secretion by the endometrium of the nutrients required for the growth of the conceptus. In summary, displays particularly high antiviral and antiproliferative potency concurrently with particular weak cytotoxicity, high antiluteolytic activity and immunomodulatory properties. In contrast with other IFNs, IFN-tau is not virally inducible. This is Interferon tau (IFNT) from Ovibos moschatus (Muskox).